We begin with the raw amino-acid sequence, 138 residues long: Small ribosomal subunit protein uS11c (138 aa).

The segment at 1–23 is disordered; it reads MAKPIPRIGSRKNGRIGSRKSGR. Positions 9–23 are enriched in basic residues; sequence GSRKNGRIGSRKSGR.

Belongs to the universal ribosomal protein uS11 family. As to quaternary structure, part of the 30S ribosomal subunit.

It is found in the plastid. The protein resides in the chloroplast. This is Small ribosomal subunit protein uS11c from Buxus microphylla (Littleleaf boxwood).